Reading from the N-terminus, the 140-residue chain is ATP synthase epsilon chain (140 aa).

Belongs to the ATPase epsilon chain family. In terms of assembly, F-type ATPases have 2 components, CF(1) - the catalytic core - and CF(0) - the membrane proton channel. CF(1) has five subunits: alpha(3), beta(3), gamma(1), delta(1), epsilon(1). CF(0) has three main subunits: a, b and c.

The protein localises to the cell inner membrane. Functionally, produces ATP from ADP in the presence of a proton gradient across the membrane. This chain is ATP synthase epsilon chain, found in Pseudoalteromonas translucida (strain TAC 125).